Consider the following 481-residue polypeptide: Cys-Gly metallodipeptidase DUG1 (481 aa).

H102 is a Zn(2+) binding site. The active site involves D104. Zn(2+) is bound at residue D137. E171 (proton acceptor) is an active-site residue. E172, D200, and H450 together coordinate Zn(2+). At S451 the chain carries Phosphoserine.

It belongs to the peptidase M20A family. As to quaternary structure, homodimer. Component of the GSH degradosomal complex composed of at least DUG1, DUG2 and DUG3. Zn(2+) serves as cofactor. Mn(2+) is required as a cofactor.

The protein localises to the cytoplasm. The protein resides in the mitochondrion. In terms of biological role, catalytic component of the GSH degradosomal complex involved in the degradation of glutathione (GSH) and other peptides containing a gamma-glu-X bond. Also functions in a DUG2-DUG3-independent manner as a dipeptidase with high specificity for Cys-Gly and no activity toward tri- or tetrapeptides. This Saccharomyces cerevisiae (strain ATCC 204508 / S288c) (Baker's yeast) protein is Cys-Gly metallodipeptidase DUG1 (DUG1).